The sequence spans 317 residues: R-phycoerythrin gamma chain, chloroplastic (317 aa).

A chloroplast-targeting transit peptide spans 1 to 40 (MASPAFAVNGMFTPVKLSGSFTASMPVDSKPAASATGVRM). Residues Cys94 and Cys133 each contribute to the phycourobilin site. (2R,3E)-phycoerythrobilin is bound at residue Cys210. Cys297 is a binding site for phycourobilin.

Heteromer of 1 alpha, 1 beta and 2 gamma chains. Post-translationally, contains four covalently linked bilin chromophores.

It localises to the plastid. It is found in the chloroplast thylakoid membrane. Critical for the incorporation of phycoerythrin in the phycobilisome complex. The polypeptide is R-phycoerythrin gamma chain, chloroplastic (Aglaothamnion neglectum (Red alga)).